A 237-amino-acid chain; its full sequence is NAD-dependent protein deacetylase (237 aa).

Residues 1 to 237 (MFTTSLRQAQ…LVETNRALQK (237 aa)) enclose the Deacetylase sirtuin-type domain. 7 residues coordinate NAD(+): alanine 18, threonine 22, phenylalanine 29, arginine 30, glutamine 95, aspartate 98, and histidine 113. Phenylalanine 29 serves as a coordination point for nicotinamide. Aspartate 98 lines the nicotinamide pocket. Residue histidine 113 is the Proton acceptor of the active site. Positions 121, 124, 140, and 142 each coordinate Zn(2+). NAD(+)-binding residues include serine 180, serine 181, asparagine 205, and isoleucine 224.

The protein belongs to the sirtuin family. Class U subfamily. Zn(2+) serves as cofactor.

The protein resides in the cytoplasm. The catalysed reaction is N(6)-acetyl-L-lysyl-[protein] + NAD(+) + H2O = 2''-O-acetyl-ADP-D-ribose + nicotinamide + L-lysyl-[protein]. Functionally, NAD-dependent protein deacetylase which modulates the activities of several enzymes which are inactive in their acetylated form. This chain is NAD-dependent protein deacetylase, found in Shouchella clausii (strain KSM-K16) (Alkalihalobacillus clausii).